We begin with the raw amino-acid sequence, 552 residues long: Scavenger receptor class B member 1 (552 aa).

Residues 1–11 (MGCSAKARWAA) lie on the Cytoplasmic side of the membrane. A helical membrane pass occupies residues 12–32 (GALGVAGLLCAVLGAVMIVMV). Residues 33–443 (PSLIKQQVLK…LVLMPKVMHY (411 aa)) lie on the Extracellular side of the membrane. Asn-102, Asn-108, Asn-173, Asn-212, Asn-227, Asn-255, Asn-310, Asn-330, and Asn-383 each carry an N-linked (GlcNAc...) asparagine glycan. The cysteines at positions 251 and 384 are disulfide-linked. A phosphoserine mark is found at Tyr-393 and Val-458. The helical transmembrane segment at 444–464 (AQYVLLALGCVLLLVPVICQI) threads the bilayer. The S-palmitoyl cysteine moiety is linked to residue Cys-462. The Cytoplasmic segment spans residues 465–552 (RSQVGAGQRA…GPSLGGGTGS (88 aa)). A Phosphoserine modification is found at Thr-493.

This sequence belongs to the CD36 family. In terms of assembly, the C-terminal region binds to PDZK1. As to quaternary structure, (Microbial infection) Interacts with hepatitis C virus E1:E2 glycoproteins. N-glycosylated. Post-translationally, the six cysteines of the extracellular domain are all involved in intramolecular disulfide bonds. As to expression, widely expressed.

It is found in the cell membrane. It localises to the membrane. The protein resides in the caveola. Its function is as follows. Receptor for different ligands such as phospholipids, cholesterol ester, lipoproteins, phosphatidylserine and apoptotic cells. Receptor for HDL, mediating selective uptake of cholesteryl ether and HDL-dependent cholesterol efflux. Also facilitates the flux of free and esterified cholesterol between the cell surface and apoB-containing lipoproteins and modified lipoproteins, although less efficiently than HDL. May be involved in the phagocytosis of apoptotic cells, via its phosphatidylserine binding activity. In terms of biological role, (Microbial infection) Acts as a receptor for hepatitis C virus in hepatocytes and appears to facilitate its cell entry. Binding between SCARB1 and the hepatitis C virus glycoprotein E2 is independent of the genotype of the viral isolate. Functionally, (Microbial infection) Mediates uptake of M.fortuitum, E.coli and S.aureus. (Microbial infection) Facilitates the entry of human coronavirus SARS-CoV-2 by acting as an entry cofactor through HDL binding. The polypeptide is Scavenger receptor class B member 1 (SCARB1) (Homo sapiens (Human)).